We begin with the raw amino-acid sequence, 599 residues long: Capsular polysaccharide biosynthesis protein CapD (599 aa).

The next 4 membrane-spanning stretches (helical) occupy residues 12-32 (ILIIIDSFIVTFSVFLGYAIL), 41-61 (IDLLVLSSVILLVSHHIFAYV), 79-99 (SVLKAVTSSIVVTLLLVSLLI), and 102-122 (SPFLRLYFITWMMHLLLIGGS).

It belongs to the polysaccharide synthase family.

The protein resides in the cell membrane. It functions in the pathway capsule biogenesis; capsule polysaccharide biosynthesis. Functionally, required for the biosynthesis of type 1 capsular polysaccharide. The chain is Capsular polysaccharide biosynthesis protein CapD (capD) from Staphylococcus aureus.